The chain runs to 380 residues: Queuine tRNA-ribosyltransferase (380 aa).

Asp-96 serves as the catalytic Proton acceptor. Substrate contacts are provided by residues 96-100 (DSGGF), Asp-150, Gln-193, and Gly-220. The interval 251–257 (GVGAPDS) is RNA binding. Asp-270 (nucleophile) is an active-site residue. The interval 275–279 (TRIAR) is RNA binding; important for wobble base 34 recognition. Residues Cys-308, Cys-310, Cys-313, and His-339 each contribute to the Zn(2+) site.

The protein belongs to the queuine tRNA-ribosyltransferase family. In terms of assembly, homodimer. Within each dimer, one monomer is responsible for RNA recognition and catalysis, while the other monomer binds to the replacement base PreQ1. The cofactor is Zn(2+).

It catalyses the reaction 7-aminomethyl-7-carbaguanine + guanosine(34) in tRNA = 7-aminomethyl-7-carbaguanosine(34) in tRNA + guanine. The protein operates within tRNA modification; tRNA-queuosine biosynthesis. In terms of biological role, catalyzes the base-exchange of a guanine (G) residue with the queuine precursor 7-aminomethyl-7-deazaguanine (PreQ1) at position 34 (anticodon wobble position) in tRNAs with GU(N) anticodons (tRNA-Asp, -Asn, -His and -Tyr). Catalysis occurs through a double-displacement mechanism. The nucleophile active site attacks the C1' of nucleotide 34 to detach the guanine base from the RNA, forming a covalent enzyme-RNA intermediate. The proton acceptor active site deprotonates the incoming PreQ1, allowing a nucleophilic attack on the C1' of the ribose to form the product. After dissociation, two additional enzymatic reactions on the tRNA convert PreQ1 to queuine (Q), resulting in the hypermodified nucleoside queuosine (7-(((4,5-cis-dihydroxy-2-cyclopenten-1-yl)amino)methyl)-7-deazaguanosine). The chain is Queuine tRNA-ribosyltransferase from Streptococcus gordonii (strain Challis / ATCC 35105 / BCRC 15272 / CH1 / DL1 / V288).